Consider the following 370-residue polypeptide: Actin-related protein 2/3 complex subunit 1A (370 aa).

6 WD repeats span residues 6–45 (FLLEPITCHAWNRDRTQIALSPNNHEVHIYKKNGSQWTKA), 50–89 (EHNGHITGIDWAPKSDRIVTCGADRNAYVWSQKDGIWKPT), 140–179 (PIRSTVLSLDWHPNNVLLAAGSCDFKCRVFSAYIKEVDEK), 202–241 (GTGGWVHGVSFSASGSRLAWVSHDSTVSVADASKSVQVST), 244–284 (TEFL…TFVS), and 322–365 (LHQN…SSIQ).

Belongs to the WD repeat ARPC1 family. As to quaternary structure, probable component of the Arp2/3 complex in which it may replace ARPC1B.

It localises to the cytoplasm. The protein localises to the cytoskeleton. It is found in the nucleus. Probably functions as a component of the Arp2/3 complex which is involved in regulation of actin polymerization and together with an activating nucleation-promoting factor (NPF) mediates the formation of branched actin networks. In addition to its role in the cytoplasmic cytoskeleton, the Arp2/3 complex also promotes actin polymerization in the nucleus, thereby regulating gene transcription and repair of damaged DNA. The protein is Actin-related protein 2/3 complex subunit 1A (Arpc1a) of Rattus norvegicus (Rat).